A 1208-amino-acid chain; its full sequence is DNA-directed RNA polymerase subunit beta (1208 aa).

The disordered stretch occupies residues 1182 to 1208; that stretch reads EKKAAEQVEDEKDDVIQNFETAEDNLD.

It belongs to the RNA polymerase beta chain family. In terms of assembly, the RNAP catalytic core consists of 2 alpha, 1 beta, 1 beta' and 1 omega subunit. When a sigma factor is associated with the core the holoenzyme is formed, which can initiate transcription.

The catalysed reaction is RNA(n) + a ribonucleoside 5'-triphosphate = RNA(n+1) + diphosphate. DNA-dependent RNA polymerase catalyzes the transcription of DNA into RNA using the four ribonucleoside triphosphates as substrates. In Enterococcus faecium (Streptococcus faecium), this protein is DNA-directed RNA polymerase subunit beta.